A 510-amino-acid polypeptide reads, in one-letter code: Photosystem II CP47 reaction center protein (510 aa).

The Cytoplasmic portion of the chain corresponds to 2–16 (GLPWYRVHTVLINDP). Residues 17-37 (GRLIAAHLMHTALVAGWAGSM) form a helical membrane-spanning segment. Residues 38 to 94 (ALYELATFDPSDPVLNPMWRQGMFVLPFMARLGVTGSWSGWSITGETGIDPGFWSFE) are Lumenal-facing. The helical transmembrane segment at 95–116 (GVALAHIVLSGLLFLAACWHWV) threads the bilayer. The Cytoplasmic segment spans residues 117-134 (YWDLELFRDPRTGEPALD). The chain crosses the membrane as a helical span at residues 135-157 (LPKMFGIHLFLAGLLCFGFGAFH). Residues 158-196 (LTGLFGPGMWVSDPYGLTGSVQPVAPEWGPDGFNPYNPG) lie on the Lumenal side of the membrane. The chain crosses the membrane as a helical span at residues 197-218 (GVVAHHIAAGIVGIIAGLFHIL). Topologically, residues 219–233 (VRPPQRLYKALRMGN) are cytoplasmic. A helical membrane pass occupies residues 234–254 (IETVLSSSIAAVFFAAFVVAG). The Lumenal portion of the chain corresponds to 255-450 (TMWYGSATTP…GIFRTSPRGW (196 aa)). The helical transmembrane segment at 451–473 (FTFAHAVFALLFFFGHIWHGART) threads the bilayer. The Cytoplasmic portion of the chain corresponds to 474-510 (LFRDVFSGIDPELSPEQVEWGFYQKVGDVTTRRKEAV).

As to quaternary structure, PSII is composed of 1 copy each of membrane proteins PsbA, PsbB, PsbC, PsbD, PsbE, PsbF, PsbH, PsbI, PsbJ, PsbK, PsbL, PsbM, PsbT, PsbX, PsbY, PsbZ, Psb30/Ycf12, peripheral proteins PsbO, CyanoQ (PsbQ), PsbU, PsbV and a large number of cofactors. It forms dimeric complexes. Part of a photosystem II (PSII) assembly intermediate complex PSII-I; crystallized from a strain deleted of psbJ, it forms monomeric PSII before addition of the oxygen evolving complex. PSII-I includes 3 assembly factors not found in mature PSII (Psb27, Psb28 and Psb34). It depends on Binds multiple chlorophylls. PSII binds additional chlorophylls, carotenoids and specific lipids. as a cofactor.

The protein localises to the cellular thylakoid membrane. Its function is as follows. One of the components of the core complex of photosystem II (PSII). It binds chlorophyll and helps catalyze the primary light-induced photochemical processes of PSII. PSII is a light-driven water:plastoquinone oxidoreductase, using light energy to abstract electrons from H(2)O, generating O(2) and a proton gradient subsequently used for ATP formation. This Thermosynechococcus vestitus (strain NIES-2133 / IAM M-273 / BP-1) protein is Photosystem II CP47 reaction center protein.